Consider the following 401-residue polypeptide: Probable [pyruvate dehydrogenase (acetyl-transferring)] kinase, mitochondrial (401 aa).

A Histidine kinase domain is found at 131 to 360 (LIELRESDGV…DACIYLKAVP (230 aa)). ATP is bound by residues 247–254 (ELFKNAMR), aspartate 286, 305–306 (ST), and 321–326 (GYGYGL).

This sequence belongs to the PDK/BCKDK protein kinase family.

The protein resides in the mitochondrion matrix. The enzyme catalyses L-seryl-[pyruvate dehydrogenase E1 alpha subunit] + ATP = O-phospho-L-seryl-[pyruvate dehydrogenase E1 alpha subunit] + ADP + H(+). Its function is as follows. Inhibits the mitochondrial pyruvate dehydrogenase complex by phosphorylation of the E1 alpha subunit, thus contributing to the regulation of glucose metabolism. Required for normal lifespan. In Caenorhabditis elegans, this protein is Probable [pyruvate dehydrogenase (acetyl-transferring)] kinase, mitochondrial (pdhk-2).